Consider the following 568-residue polypeptide: Protein adenylyltransferase SelO, mitochondrial (568 aa).

The ATP site is built by glycine 120, glycine 122, arginine 123, lysine 144, aspartate 156, glycine 157, arginine 208, and arginine 215. Aspartate 287 functions as the Proton acceptor in the catalytic mechanism. Mg(2+) contacts are provided by asparagine 288 and aspartate 297. Position 297 (aspartate 297) interacts with ATP.

The protein belongs to the SELO family. Requires Mg(2+) as cofactor. Forms probably one or more intrachain disulfide bridges.

It localises to the mitochondrion. The catalysed reaction is L-tyrosyl-[protein] + ATP = O-(5'-adenylyl)-L-tyrosyl-[protein] + diphosphate. Its function is as follows. Catalyzes the transfer of adenosine 5'-monophosphate (AMP) to Tyr residues of target mitochondrial proteins (AMPylation). Involved in redox homeostasis by regulating the cellular response to oxidative stress. Regulates protein S-glutathionylation levels possibly by AMPylation of deglutathionylation enzymes such as glutaredoxins. This is Protein adenylyltransferase SelO, mitochondrial from Schizosaccharomyces pombe (strain 972 / ATCC 24843) (Fission yeast).